Reading from the N-terminus, the 245-residue chain is 5-oxoprolinase subunit A (245 aa).

The protein belongs to the LamB/PxpA family. Forms a complex composed of PxpA, PxpB and PxpC.

The catalysed reaction is 5-oxo-L-proline + ATP + 2 H2O = L-glutamate + ADP + phosphate + H(+). In terms of biological role, catalyzes the cleavage of 5-oxoproline to form L-glutamate coupled to the hydrolysis of ATP to ADP and inorganic phosphate. This Neisseria meningitidis serogroup A / serotype 4A (strain DSM 15465 / Z2491) protein is 5-oxoprolinase subunit A.